The chain runs to 354 residues: Inositol-tetrakisphosphate 1-kinase 1 (354 aa).

Positions 1–16 (MRVHEEASEDKEREVE) are enriched in basic and acidic residues. Residues 1-24 (MRVHEEASEDKEREVEEAPDLMPL) form a disordered region. 1D-myo-inositol 1,3,4-trisphosphate is bound by residues Lys53 and Lys95. The ATP site is built by Arg130 and Lys180. Residues 140-347 (LNLSNAYGEV…FLLSLVQNKY (208 aa)) form the ATP-grasp domain. His191 and Lys223 together coordinate 1D-myo-inositol 1,3,4-trisphosphate. ATP contacts are provided by residues 212–223 (QEFVNHGGILFK) and Ser238. Asp303, Asp318, and Asn320 together coordinate Mg(2+). Asn320 contributes to the 1D-myo-inositol 1,3,4-trisphosphate binding site.

This sequence belongs to the ITPK1 family. In terms of assembly, monomer. Requires Mg(2+) as cofactor. As to expression, expressed in roots, leaves, flowers, anthers and embryos.

The catalysed reaction is 1D-myo-inositol 3,4,5,6-tetrakisphosphate + ATP = 1D-myo-inositol 1,3,4,5,6-pentakisphosphate + ADP + H(+). It catalyses the reaction 1D-myo-inositol 1,3,4-trisphosphate + ATP = 1D-myo-inositol 1,3,4,5-tetrakisphosphate + ADP + H(+). It carries out the reaction 1D-myo-inositol 1,3,4-trisphosphate + ATP = 1D-myo-inositol 1,3,4,6-tetrakisphosphate + ADP + H(+). In terms of biological role, kinase that can phosphorylate various inositol polyphosphate such as Ins(3,4,5,6)P4 or Ins(1,3,4)P3 and participates in phytic acid biosynthesis in developing seeds. Phytic acid is the primary storage form of phosphorus in cereal grains and other plant seeds. The polypeptide is Inositol-tetrakisphosphate 1-kinase 1 (Oryza sativa subsp. japonica (Rice)).